A 148-amino-acid polypeptide reads, in one-letter code: Nucleoside diphosphate kinase (148 aa).

Lys10, Phe58, Arg86, Thr92, Arg103, and Asn113 together coordinate ATP. The Pros-phosphohistidine intermediate role is filled by His116.

The protein belongs to the NDK family. Mg(2+) serves as cofactor.

Its subcellular location is the cytoplasm. The enzyme catalyses a 2'-deoxyribonucleoside 5'-diphosphate + ATP = a 2'-deoxyribonucleoside 5'-triphosphate + ADP. It catalyses the reaction a ribonucleoside 5'-diphosphate + ATP = a ribonucleoside 5'-triphosphate + ADP. Its function is as follows. Major role in the synthesis of nucleoside triphosphates other than ATP. The ATP gamma phosphate is transferred to the NDP beta phosphate via a ping-pong mechanism, using a phosphorylated active-site intermediate. This chain is Nucleoside diphosphate kinase, found in Thermoplasma acidophilum (strain ATCC 25905 / DSM 1728 / JCM 9062 / NBRC 15155 / AMRC-C165).